A 226-amino-acid chain; its full sequence is 2-C-methyl-D-erythritol 4-phosphate cytidylyltransferase (226 aa).

It belongs to the IspD/TarI cytidylyltransferase family. IspD subfamily.

The catalysed reaction is 2-C-methyl-D-erythritol 4-phosphate + CTP + H(+) = 4-CDP-2-C-methyl-D-erythritol + diphosphate. It participates in isoprenoid biosynthesis; isopentenyl diphosphate biosynthesis via DXP pathway; isopentenyl diphosphate from 1-deoxy-D-xylulose 5-phosphate: step 2/6. Catalyzes the formation of 4-diphosphocytidyl-2-C-methyl-D-erythritol from CTP and 2-C-methyl-D-erythritol 4-phosphate (MEP). The chain is 2-C-methyl-D-erythritol 4-phosphate cytidylyltransferase from Rhodococcus opacus (strain B4).